Here is a 385-residue protein sequence, read N- to C-terminus: Outer membrane protein assembly factor BamB (385 aa).

The N-terminal stretch at 1–20 is a signal peptide; that stretch reads MRKVLKKAALCTFGFSMLFG. Cysteine 21 carries the N-palmitoyl cysteine lipid modification. Cysteine 21 carries the S-diacylglycerol cysteine lipid modification.

Belongs to the BamB family. In terms of assembly, part of the Bam complex.

The protein resides in the cell outer membrane. Functionally, part of the outer membrane protein assembly complex, which is involved in assembly and insertion of beta-barrel proteins into the outer membrane. This is Outer membrane protein assembly factor BamB from Aliivibrio fischeri (strain ATCC 700601 / ES114) (Vibrio fischeri).